A 732-amino-acid chain; its full sequence is TIR domain-containing adapter molecule 1 (732 aa).

A TRIF-NTD region spans residues methionine 1 to serine 153. Positions glutamate 84 to aspartate 91 match the TRAF6-binding motif. The tract at residues cysteine 144 to histidine 191 is disordered. Polar residues predominate over residues histidine 159 to glutamine 178. A pLxIS motif motif is present at residues leucine 206 to serine 209. The residue at position 209 (serine 209) is a Phosphoserine. Lysine 228 participates in a covalent cross-link: Glycyl lysine isopeptide (Lys-Gly) (interchain with G-Cter in ubiquitin). Short sequence motifs (TRAF6-binding) lie at residues glutamine 247–tryptophan 254 and histidine 296–threonine 306. Residues serine 305 to proline 331 are compositionally biased toward polar residues. Positions serine 305–serine 389 are disordered. Residues serine 345–proline 359 are compositionally biased toward low complexity. Positions lysine 395–lysine 534 constitute a TIR domain. The sufficient to induce apoptosis stretch occupies residues tryptophan 514–glutamate 713. Disordered stretches follow at residues threonine 603–proline 679 and methionine 696–glutamate 732. Pro residues-rich tracts occupy residues proline 604–serine 615 and proline 625–serine 657. A compositionally biased stretch (low complexity) spans serine 658 to alanine 671.

In terms of assembly, homodimer. Found in a multi-helicase-TICAM1 complex at least composed of DHX36, DDX1, DDX21 and TICAM1; this complex exists in resting cells with or without poly(I:C) RNA ligand stimulation. Interacts (via TIR domain) with DDX21 (via C-terminus). Interacts (via TIR domain) with DHX36 (via C-terminus). Interacts with AZI2 and IRF7. Interacts (when phosphorylated) with IRF3; following activation and phosphorylation on the pLxIS motif by TBK1, recruits IRF3. Interacts with TICAM2 in TLR4 recruitment. Interaction with PIAS4 inhibits the TICAM1-induced NF-kappa-B, IRF and IFNB1 activation. Interacts with IKBKB and IKBKE. Interaction with SARM1 blocks TICAM1-dependent transcription factor activation. Interacts with TRAF3. Interacts with TRAFD1. Interacts with UBQLN1 (via UBA domain). Interacts with TBK1, TRAF6 and RIPK1 and these interactions are enhanced in the presence of WDFY1. Interacts (via the TIR domain) with TLR3 in response to poly(I:C) and this interaction is enhanced in the presence of WDFY1. Interacts with TLR4 in response to poly(I:C) in a WDFY1-dependent manner. Interacts with WDFY1 in response to poly(I:C). Interacts with TRIM56. Interacts (via the TIR domain) with TLR5. Interacts with TRIM8. Interacts with TAX1BP1 and TRIM32; these interactions target TICAM1 to TAX1BP1-mediated selective autophagic degradation. Interacts with DDX50. Post-translationally, phosphorylated by TBK1. Following activation, phosphorylated by TBK1 at Ser-209 in the pLxIS motif. The phosphorylated pLxIS motif constitutes an IRF3-binding motif, leading to recruitment of the transcription factor IRF3 to induce type-I interferons and other cytokines. Polyubiquitinated at Lys-228 by TRIM38 with 'Lys-48'-linked chains, leading to proteasomal degradation. Polyubiquitinated with 'Lys-6'- and 'Lys-33'-linked chains in a TRIM8-dependent manner; ubiquitination disrupts the interaction with TBK1 and subsequent interferon production.

The protein localises to the cytoplasm. Its subcellular location is the cytosol. It localises to the cytoplasmic vesicle. The protein resides in the autophagosome. It is found in the mitochondrion. Its function is as follows. Involved in innate immunity against invading pathogens. Adapter used by TLR3, TLR4 (through TICAM2) and TLR5 to mediate NF-kappa-B and interferon-regulatory factor (IRF) activation, and to induce apoptosis. Ligand binding to these receptors results in TRIF recruitment through its TIR domain. Distinct protein-interaction motifs allow recruitment of the effector proteins TBK1, TRAF6 and RIPK1, which in turn, lead to the activation of transcription factors IRF3 and IRF7, NF-kappa-B and FADD respectively. Phosphorylation by TBK1 on the pLxIS motif leads to recruitment and subsequent activation of the transcription factor IRF3 to induce expression of type I interferon and exert a potent immunity against invading pathogens. Component of a multi-helicase-TICAM1 complex that acts as a cytoplasmic sensor of viral double-stranded RNA (dsRNA) and plays a role in the activation of a cascade of antiviral responses including the induction of pro-inflammatory cytokines. The protein is TIR domain-containing adapter molecule 1 (Ticam1) of Mus musculus (Mouse).